We begin with the raw amino-acid sequence, 444 residues long: C4-dicarboxylate transport protein 1 (444 aa).

The next 9 membrane-spanning stretches (helical) occupy residues 9–29 (SIFL…VGIP), 42–62 (FIKL…VNGI), 78–98 (SVIY…VVAY), 152–172 (ILQV…VGEQ), 190–210 (IMGM…AFTT), 221–241 (LGAL…AVLG), 307–327 (FSIY…TPLA), 354–374 (VILA…LVLV), and 380–400 (FMGI…TVTI).

It belongs to the dicarboxylate/amino acid:cation symporter (DAACS) (TC 2.A.23) family.

Its subcellular location is the cell inner membrane. Functionally, responsible for the transport of dicarboxylates such as succinate, fumarate, and malate from the periplasm across the membrane. This Pseudomonas paraeruginosa (strain DSM 24068 / PA7) (Pseudomonas aeruginosa (strain PA7)) protein is C4-dicarboxylate transport protein 1.